Here is a 386-residue protein sequence, read N- to C-terminus: Succinyl-diaminopimelate desuccinylase (386 aa).

His-77 is a Zn(2+) binding site. Asp-79 is a catalytic residue. Asp-110 lines the Zn(2+) pocket. Glu-144 acts as the Proton acceptor in catalysis. Zn(2+) contacts are provided by Glu-145, Glu-173, and His-359.

It belongs to the peptidase M20A family. DapE subfamily. In terms of assembly, homodimer. It depends on Zn(2+) as a cofactor. Co(2+) is required as a cofactor.

The enzyme catalyses N-succinyl-(2S,6S)-2,6-diaminopimelate + H2O = (2S,6S)-2,6-diaminopimelate + succinate. Its pathway is amino-acid biosynthesis; L-lysine biosynthesis via DAP pathway; LL-2,6-diaminopimelate from (S)-tetrahydrodipicolinate (succinylase route): step 3/3. Its function is as follows. Catalyzes the hydrolysis of N-succinyl-L,L-diaminopimelic acid (SDAP), forming succinate and LL-2,6-diaminopimelate (DAP), an intermediate involved in the bacterial biosynthesis of lysine and meso-diaminopimelic acid, an essential component of bacterial cell walls. This Methylibium petroleiphilum (strain ATCC BAA-1232 / LMG 22953 / PM1) protein is Succinyl-diaminopimelate desuccinylase.